A 251-amino-acid polypeptide reads, in one-letter code: MAGHSKWETTKRKKAAIDAKRGKEFARLVKNIEVAARMGGGDPDANPTLQDAITKAKKSSVPNDNIERARKRGSGEEAGGSDWETIMYEGYGPGGVAMLIECLTDNRNRAATDVRTAMTKNGGNMADAGSVSYQFERKGQALLDKGELTEDDLLLAVLDAGAEEVKDHGEQFEVLCDISDLMGVREALKEAGIEYDSVEQVYRSNLEVPADAELARKVANLIDALDDVDDVQEIYTNMSVSDEVAAELAED.

Residues 56-79 (AKKSSVPNDNIERARKRGSGEEAG) are disordered.

This sequence belongs to the TACO1 family.

It localises to the cytoplasm. The chain is Probable transcriptional regulatory protein cu0933 from Corynebacterium urealyticum (strain ATCC 43042 / DSM 7109).